The sequence spans 223 residues: uncharacterized protein (223 aa).

Residues 1 to 30 (MASATVRNVPLLDDDTIPFGEEDEMRDPSR) form a disordered region. A compositionally biased stretch (acidic residues) spans 12-25 (LDDDTIPFGEEDEM). Transmembrane regions (helical) follow at residues 35 to 55 (YTHPYVTFFHLFFRGAAILIY), 56 to 76 (MFCGWFSDSFITSFVFVVLFL), 129 to 149 (IFWLGLILCPVFWGLFFLFAL), and 154 to 174 (FKWLLLVMIAIALNAANLYGY).

This sequence belongs to the TVP23 family.

The protein localises to the membrane. This is an uncharacterized protein from Drosophila melanogaster (Fruit fly).